A 397-amino-acid polypeptide reads, in one-letter code: Acetate kinase (397 aa).

Residue Asn8 participates in Mg(2+) binding. Lys15 serves as a coordination point for ATP. A substrate-binding site is contributed by Arg89. Residue Asp146 is the Proton donor/acceptor of the active site. Residues His206–Gly210, Asp281–Arg283, and Gly328–Asn332 contribute to the ATP site. Position 381 (Glu381) interacts with Mg(2+).

The protein belongs to the acetokinase family. In terms of assembly, homodimer. The cofactor is Mg(2+). It depends on Mn(2+) as a cofactor.

The protein localises to the cytoplasm. It catalyses the reaction acetate + ATP = acetyl phosphate + ADP. The protein operates within metabolic intermediate biosynthesis; acetyl-CoA biosynthesis; acetyl-CoA from acetate: step 1/2. Its function is as follows. Catalyzes the formation of acetyl phosphate from acetate and ATP. Can also catalyze the reverse reaction. The chain is Acetate kinase from Oceanobacillus iheyensis (strain DSM 14371 / CIP 107618 / JCM 11309 / KCTC 3954 / HTE831).